A 1054-amino-acid polypeptide reads, in one-letter code: Leucine-rich repeats and immunoglobulin-like domains protein 2 (1054 aa).

The first 39 residues, 1–39 (MAAAPRGIWEQRRLGCGLGPLARLLILAQALRLLPAARA), serve as a signal peptide directing secretion. Positions 40–74 (GLCPAPCACRLPLLDCSRRKLPAPSWRALSGPLPS) constitute an LRRNT domain. LRR repeat units lie at residues 75–96 (DISS…LESQ), 97–118 (TLQE…GEPT), 120–141 (NITL…AFEL), 144–165 (ALES…SFPR), 167–188 (SLKY…CFDN), 192–213 (SLLV…VFKL), 215–236 (HLQF…TFQG), 239–260 (SLRS…AFFG), 263–284 (NMEE…WLYG), 287–308 (MLQQ…AWEF), 311–332 (RLSE…AFVG), 335–356 (LLER…VFRF), 359–381 (NLQT…SEAF), 386–407 (SLTK…AFIG), and 410–431 (SLEY…AFSQ). Asn-90 is a glycosylation site (N-linked (GlcNAc...) asparagine). A glycan (N-linked (GlcNAc...) asparagine) is linked at Asn-120. N-linked (GlcNAc...) asparagine glycans are attached at residues Asn-172 and Asn-188. The N-linked (GlcNAc...) asparagine glycan is linked to Asn-273. N-linked (GlcNAc...) asparagine glycosylation is found at Asn-440, Asn-467, Asn-513, Asn-570, and Asn-588. Residues 442–493 (SSLLCDCHLKWLLQWLVDNNFHHSVNVSCAHPEWLAGQSILNVDLKDFVCDD) form the LRRCT domain. Ig-like C2-type domains are found at residues 497–596 (PQIR…AKLT), 601–690 (PSFL…ASLT), and 695–784 (PSFI…NVIS). A disulfide bridge connects residues Cys-518 and Cys-579. Cys-622 and Cys-674 form a disulfide bridge. Residues Asn-686 and Asn-727 are each glycosylated (N-linked (GlcNAc...) asparagine). Residues Cys-716 and Cys-765 are joined by a disulfide bond. A helical membrane pass occupies residues 807–827 (IVIIVVVCCVVGTSLIWVIVI). Tyr-905 carries the post-translational modification Phosphotyrosine. Asn-1024 is a glycosylation site (N-linked (GlcNAc...) asparagine).

The protein localises to the cell membrane. Its subcellular location is the cytoplasm. The sequence is that of Leucine-rich repeats and immunoglobulin-like domains protein 2 (Lrig2) from Mus musculus (Mouse).